The chain runs to 248 residues: tRNA (guanine-N(1)-)-methyltransferase (248 aa).

Residues glycine 116 and 135–140 (IGDFVL) contribute to the S-adenosyl-L-methionine site.

The protein belongs to the RNA methyltransferase TrmD family. In terms of assembly, homodimer.

The protein localises to the cytoplasm. The catalysed reaction is guanosine(37) in tRNA + S-adenosyl-L-methionine = N(1)-methylguanosine(37) in tRNA + S-adenosyl-L-homocysteine + H(+). Functionally, specifically methylates guanosine-37 in various tRNAs. This is tRNA (guanine-N(1)-)-methyltransferase from Anaeromyxobacter sp. (strain Fw109-5).